The chain runs to 532 residues: 2,3-bisphosphoglycerate-independent phosphoglycerate mutase (532 aa).

Asp-15 and Ser-65 together coordinate Mn(2+). Residue Ser-65 is the Phosphoserine intermediate of the active site. Residues His-126, 156–157 (RD), Arg-188, Arg-194, 258–261 (RPDR), and Lys-331 contribute to the substrate site. Mn(2+) contacts are provided by Asp-398, His-402, Asp-439, His-440, and His-457.

Belongs to the BPG-independent phosphoglycerate mutase family. As to quaternary structure, monomer. Mn(2+) serves as cofactor.

The enzyme catalyses (2R)-2-phosphoglycerate = (2R)-3-phosphoglycerate. The protein operates within carbohydrate degradation; glycolysis; pyruvate from D-glyceraldehyde 3-phosphate: step 3/5. Catalyzes the interconversion of 2-phosphoglycerate and 3-phosphoglycerate. This chain is 2,3-bisphosphoglycerate-independent phosphoglycerate mutase, found in Gloeothece citriformis (strain PCC 7424) (Cyanothece sp. (strain PCC 7424)).